The following is a 565-amino-acid chain: Proline--tRNA ligase (565 aa).

It belongs to the class-II aminoacyl-tRNA synthetase family. ProS type 1 subfamily. In terms of assembly, homodimer.

It localises to the cytoplasm. The enzyme catalyses tRNA(Pro) + L-proline + ATP = L-prolyl-tRNA(Pro) + AMP + diphosphate. Functionally, catalyzes the attachment of proline to tRNA(Pro) in a two-step reaction: proline is first activated by ATP to form Pro-AMP and then transferred to the acceptor end of tRNA(Pro). As ProRS can inadvertently accommodate and process non-cognate amino acids such as alanine and cysteine, to avoid such errors it has two additional distinct editing activities against alanine. One activity is designated as 'pretransfer' editing and involves the tRNA(Pro)-independent hydrolysis of activated Ala-AMP. The other activity is designated 'posttransfer' editing and involves deacylation of mischarged Ala-tRNA(Pro). The misacylated Cys-tRNA(Pro) is not edited by ProRS. The protein is Proline--tRNA ligase of Francisella tularensis subsp. tularensis (strain FSC 198).